Reading from the N-terminus, the 892-residue chain is DNA mismatch repair protein MutS (892 aa).

ATP is bound at residue 634-641 (GPNMGGKS).

The protein belongs to the DNA mismatch repair MutS family.

In terms of biological role, this protein is involved in the repair of mismatches in DNA. It is possible that it carries out the mismatch recognition step. This protein has a weak ATPase activity. The protein is DNA mismatch repair protein MutS of Paraburkholderia phymatum (strain DSM 17167 / CIP 108236 / LMG 21445 / STM815) (Burkholderia phymatum).